A 452-amino-acid chain; its full sequence is Exodeoxyribonuclease 7 large subunit (452 aa).

Belongs to the XseA family. In terms of assembly, heterooligomer composed of large and small subunits.

It is found in the cytoplasm. It catalyses the reaction Exonucleolytic cleavage in either 5'- to 3'- or 3'- to 5'-direction to yield nucleoside 5'-phosphates.. In terms of biological role, bidirectionally degrades single-stranded DNA into large acid-insoluble oligonucleotides, which are then degraded further into small acid-soluble oligonucleotides. This chain is Exodeoxyribonuclease 7 large subunit, found in Bacillus mycoides (strain KBAB4) (Bacillus weihenstephanensis).